Reading from the N-terminus, the 154-residue chain is Superoxide dismutase [Cu-Zn] (154 aa).

Residues histidine 47, histidine 49, and histidine 64 each coordinate Cu cation. Cysteine 58 and cysteine 147 are oxidised to a cystine. Residues histidine 64, histidine 72, histidine 81, and aspartate 84 each coordinate Zn(2+). Histidine 121 serves as a coordination point for Cu cation. The span at aspartate 125–lysine 137 shows a compositional bias: basic and acidic residues. Positions aspartate 125–cysteine 147 are disordered. A substrate-binding site is contributed by arginine 144.

As to quaternary structure, homodimer. The cofactor is Cu cation. It depends on Zn(2+) as a cofactor.

It is found in the cytoplasm. The enzyme catalyses 2 superoxide + 2 H(+) = H2O2 + O2. Functionally, destroys radicals which are normally produced within the cells and which are toxic to biological systems. The chain is Superoxide dismutase [Cu-Zn] from Aspergillus niger.